The sequence spans 177 residues: Zinc metalloproteinase-disintegrin-like scutiarin (177 aa).

A Disintegrin domain is found at 1-63 (NPCCDAATCK…ECPADVFHKN (63 aa)). Intrachain disulfides connect cysteine 3–cysteine 26, cysteine 17–cysteine 23, cysteine 22–cysteine 48, cysteine 35–cysteine 55, cysteine 42–cysteine 74, cysteine 67–cysteine 79, cysteine 86–cysteine 136, cysteine 101–cysteine 147, cysteine 114–cysteine 124, and cysteine 131–cysteine 173. A D/ECD-tripeptide motif is present at residues 41 to 43 (ECD). Residues aspartate 43, proline 44, glutamate 46, aspartate 58, and valine 59 each contribute to the Ca(2+) site.

This sequence belongs to the venom metalloproteinase (M12B) family. P-III subfamily. P-IIIa sub-subfamily. In terms of assembly, monomer. Zn(2+) is required as a cofactor. Glycosylated. As to expression, expressed by the venom gland.

Its subcellular location is the secreted. Functionally, snake venom metalloproteinase that impairs hemostasis in the envenomed animal. The chain is Zinc metalloproteinase-disintegrin-like scutiarin from Crotalus scutulatus scutulatus (Mojave rattlesnake).